The primary structure comprises 264 residues: Glutamate 5-kinase (264 aa).

Residue Lys9 participates in ATP binding. Substrate-binding residues include Ser47, Asp132, and Asn144. ATP contacts are provided by residues 164–165 (SD) and 206–212 (TGGIVTK).

The protein belongs to the glutamate 5-kinase family.

The protein localises to the cytoplasm. It carries out the reaction L-glutamate + ATP = L-glutamyl 5-phosphate + ADP. The protein operates within amino-acid biosynthesis; L-proline biosynthesis; L-glutamate 5-semialdehyde from L-glutamate: step 1/2. Its function is as follows. Catalyzes the transfer of a phosphate group to glutamate to form L-glutamate 5-phosphate. The protein is Glutamate 5-kinase of Helicobacter hepaticus (strain ATCC 51449 / 3B1).